The following is a 101-amino-acid chain: Doublesex- and mab-3-related transcription factor 1 (101 aa).

Positions 1 to 13 form a DNA-binding region, DM; that stretch reads SLIAERQRVMAAQ. Residues 52 to 75 are compositionally biased toward low complexity; it reads CLLLESSSPTHSTSTVTTVSTSPS. The tract at residues 52-79 is disordered; it reads CLLLESSSPTHSTSTVTTVSTSPSEGRM.

It belongs to the DMRT family.

It localises to the nucleus. In terms of biological role, may be required for testis development. This Alligator mississippiensis (American alligator) protein is Doublesex- and mab-3-related transcription factor 1 (DMRT1).